A 224-amino-acid polypeptide reads, in one-letter code: Lipoprotein-releasing system ATP-binding protein LolD (224 aa).

Positions 5–224 (LVLDGLTKAY…VVRLEAGRVV (220 aa)) constitute an ABC transporter domain. 42 to 49 (APSGAGKS) lines the ATP pocket.

It belongs to the ABC transporter superfamily. Lipoprotein translocase (TC 3.A.1.125) family. As to quaternary structure, the complex is composed of two ATP-binding proteins (LolD) and two transmembrane proteins (LolC and LolE).

The protein localises to the cell inner membrane. Its function is as follows. Part of the ABC transporter complex LolCDE involved in the translocation of mature outer membrane-directed lipoproteins, from the inner membrane to the periplasmic chaperone, LolA. Responsible for the formation of the LolA-lipoprotein complex in an ATP-dependent manner. This is Lipoprotein-releasing system ATP-binding protein LolD from Cereibacter sphaeroides (strain ATCC 17023 / DSM 158 / JCM 6121 / CCUG 31486 / LMG 2827 / NBRC 12203 / NCIMB 8253 / ATH 2.4.1.) (Rhodobacter sphaeroides).